Here is a 317-residue protein sequence, read N- to C-terminus: Large ribosomal subunit protein uL10 (317 aa).

This sequence belongs to the universal ribosomal protein uL10 family. In terms of assembly, P0 forms a pentameric complex by interaction with dimers of P1 and P2. Phosphorylated.

Functionally, ribosomal protein P0 is the functional equivalent of E.coli protein L10. In Ictalurus punctatus (Channel catfish), this protein is Large ribosomal subunit protein uL10 (rplp0).